Consider the following 344-residue polypeptide: Endoplasmic reticulum junction formation protein lunapark-1 (344 aa).

Topologically, residues 1–39 (MGNLFSRTKSPATELERVVLSIEDFKKRLQTISASNSST) are cytoplasmic. Residues 40 to 60 (LYYYYMGVIIILSIAMAHTWL) traverse the membrane as a helical segment. Residues 61-68 (RFDDPTKT) are Lumenal-facing. The chain crosses the membrane as a helical span at residues 69-89 (YVACALVFGATVIVLTGRYII). At 90–344 (NCFFAWRTNR…ADETAVVEKS (255 aa)) the chain is on the cytoplasmic side. The stretch at 116–140 (DLVKETLKFKEAKEILDRYEEKTEA) forms a coiled coil. 2 disordered regions span residues 136-155 (EKTE…HQQK) and 171-192 (QKRV…IAFD). The segment covering 140–155 (AGNTPTENSKLIHQQK) has biased composition (polar residues). The C4-type; plays a role in ER morphology zinc-finger motif lies at 239–264 (CSICHTHNGMSVPAEYPFISFRCFEC). Positions 275-344 (PHLPITRPPM…ADETAVVEKS (70 aa)) are disordered. A compositionally biased stretch (polar residues) spans 312–326 (PNPSTDLTPSASQHG). The segment covering 327–344 (SDSEPEKNADETAVVEKS) has biased composition (basic and acidic residues).

The protein belongs to the lunapark family.

The protein resides in the endoplasmic reticulum membrane. In terms of biological role, plays a role in tubular endoplasmic reticulum network formation and maintenance. May be involved in central nervous system development. Has a presynaptic role in neurotransmission. Likely to operate in synaptogenesis by regulating vesicular transport or localization. Required for correct localization of rab-3 and snb-1. This chain is Endoplasmic reticulum junction formation protein lunapark-1, found in Caenorhabditis briggsae.